Here is an 862-residue protein sequence, read N- to C-terminus: Protein translocase subunit SecA (862 aa).

ATP contacts are provided by residues glutamine 86, 104-108, and aspartate 499; that span reads GEGKT. The Zn(2+) site is built by cysteine 848, cysteine 850, cysteine 859, and histidine 860.

The protein belongs to the SecA family. Monomer and homodimer. Part of the essential Sec protein translocation apparatus which comprises SecA, SecYEG and auxiliary proteins SecDF-YajC and YidC. Requires Zn(2+) as cofactor.

The protein resides in the cell inner membrane. The protein localises to the cytoplasm. The enzyme catalyses ATP + H2O + cellular proteinSide 1 = ADP + phosphate + cellular proteinSide 2.. Part of the Sec protein translocase complex. Interacts with the SecYEG preprotein conducting channel. Has a central role in coupling the hydrolysis of ATP to the transfer of proteins into and across the cell membrane, serving both as a receptor for the preprotein-SecB complex and as an ATP-driven molecular motor driving the stepwise translocation of polypeptide chains across the membrane. This chain is Protein translocase subunit SecA, found in Ehrlichia chaffeensis (strain ATCC CRL-10679 / Arkansas).